The primary structure comprises 432 residues: Trigger factor (432 aa).

Residues 161–246 (GSRATIDFVG…LNKVEARELP (86 aa)) form the PPIase FKBP-type domain.

Belongs to the FKBP-type PPIase family. Tig subfamily.

Its subcellular location is the cytoplasm. The catalysed reaction is [protein]-peptidylproline (omega=180) = [protein]-peptidylproline (omega=0). In terms of biological role, involved in protein export. Acts as a chaperone by maintaining the newly synthesized protein in an open conformation. Functions as a peptidyl-prolyl cis-trans isomerase. The polypeptide is Trigger factor (Vibrio atlanticus (strain LGP32) (Vibrio splendidus (strain Mel32))).